The primary structure comprises 697 residues: MCCAVCGPEPGRIGEVTPLGPCPAQHRGGPLRPSELAQASVMAALCAVTAIISVVVPFAAGLALLGTVPTGLLAYRYRLRVLAAATVAAGMIAFLIAGLGGFMGVVHSAYIGGLTGIVKRRGRGTPTVVVSSLIGGFVFGAAMVGMLAAMVRLRHLIFKVMTANVDGIAATLARMHMQGAAADVKRYFAEGLQYWPWVLLGYFNIGIMIVSLIGWWALSRLLERMRGIPDVHKLDPPPGDDVDALIGPVPVRLDKVRFRYPRAGQDALREVSLDVRAGEHLAIIGANGSGKTTLMLILAGRAPTSGTVDRPGTVGLGKLGGTAVVLQHPESQVLGTRVADDVVWGLPLGTTADVGRLLSEVGLEALAERDTGSLSGGELQRLALAAALAREPAMLIADEVTTMVDQQGRDALLAVLSGLTQRHRTALVHITHYDNEADSADRTLSLSDSPDNTDMVHTAAMPAPVIGVDQPQHAPALELVGVGHEYASGTPWAKTALRDINFVVEQGDGVLIHGGNGSGKSTLAWIMAGLTIPTTGACLLDGRPTHEQVGAVALSFQAARLQLMRSRVDLEVASAAGFSASEQDRVAAALTVVGLDPALGARRIDQLSGGQMRRVVLAGLLARAPRALILDEPLAGLDAASQRGLLRLLEDLRRARGLTVVVVSHDFAGMEELCPRTLHLRDGVLESAAASEAGGMS.

Transmembrane regions (helical) follow at residues 45–65, 86–106, 128–148, 198–218, and 280–300; these read LCAV…LALL, TVAA…MGVV, VVVS…GMLA, VLLG…WWAL, and HLAI…ILAG. 2 ABC transporter domains span residues 251–473 and 477–696; these read VRLD…QPQH and LELV…AGGM. ATP contacts are provided by residues 285-292 and 514-521; these read GANGSGKT and GGNGSGKS. The helical transmembrane segment at 522 to 542 threads the bilayer; it reads TLAWIMAGLTIPTTGACLLDG.

Belongs to the ABC transporter superfamily.

The protein localises to the cell membrane. This is an uncharacterized protein from Mycobacterium tuberculosis (strain CDC 1551 / Oshkosh).